The primary structure comprises 1293 residues: Receptor-type tyrosine-protein phosphatase C (1293 aa).

The signal sequence occupies residues 1–25 (MTMGLWLKLLAFGFALLDTEVFVTG). The Extracellular portion of the chain corresponds to 26-566 (QTPTPSDELS…RNESTNFNAK (541 aa)). Residues 43–174 (LPQSDPLPAR…STTDISSGAS (132 aa)) are disordered. Polar residues-rich tracts occupy residues 53-72 (TTES…SETT), 88-110 (QPDS…QADN), and 149-169 (LARN…TTDI). Asn-66 carries N-linked (GlcNAc...) asparagine glycosylation. Residues Asn-152, Asn-163, Asn-209, Asn-213, Asn-220, Asn-255, Asn-260, Asn-292, Asn-313, Asn-324, Asn-349, Asn-418, Asn-429, Asn-459, and Asn-491 are each glycosylated (N-linked (GlcNAc...) asparagine). 2 Fibronectin type-III domains span residues 376–472 (IPET…TKAD) and 473–568 (RPDK…AKAL). The chain crosses the membrane as a helical span at residues 567–588 (ALIIFLVFLIIVTSIALLVVLY). Over 589–1293 (KIYDLRKKRS…SASPAPTQSS (705 aa)) the chain is Cytoplasmic. Tyrosine-protein phosphatase domains are found at residues 642-901 (FLAE…LVEY) and 933-1216 (LEAE…IASI). Tyr-672 bears the Phosphotyrosine mark. Residues Asp-810, 842 to 848 (CSAGVGR), and Gln-886 contribute to the substrate site. Cys-842 acts as the Phosphocysteine intermediate in catalysis. Phosphoserine is present on residues Ser-964, Ser-983, Ser-986, Ser-990, Ser-993, Ser-994, and Ser-998. The segment at 980 to 1003 (LEMSKESEPESDESSDDDSDSEET) is disordered. A compositionally biased stretch (acidic residues) spans 988-1001 (PESDESSDDDSDSE). Catalysis depends on Cys-1157, which acts as the Phosphocysteine intermediate. Phosphoserine is present on Ser-1229. Positions 1240 to 1293 (DGGKQDANCVRPDGPLNKAQEDSRGVGTPEPTNSAEEPEHAANGSASPAPTQSS) are disordered. Thr-1267 carries the phosphothreonine modification. The segment covering 1283-1293 (GSASPAPTQSS) has biased composition (polar residues). Ser-1286 bears the Phosphoserine mark.

It belongs to the protein-tyrosine phosphatase family. Receptor class 1/6 subfamily. In terms of assembly, interacts with SKAP1. Interacts with DPP4; the interaction is enhanced in an interleukin-12-dependent manner in activated lymphocytes. Binds GANAB and PRKCSH. Interacts with CD53; this interaction stabilizes PTPRC on the membrane and is required for optimal phosphatase activity. Interacts with CLEC10A. Post-translationally, heavily N- and O-glycosylated.

The protein resides in the cell membrane. It is found in the membrane raft. It localises to the synapse. It catalyses the reaction O-phospho-L-tyrosyl-[protein] + H2O = L-tyrosyl-[protein] + phosphate. In terms of biological role, protein tyrosine-protein phosphatase required for T-cell activation through the antigen receptor. Acts as a positive regulator of T-cell coactivation upon binding to DPP4. The first PTPase domain has enzymatic activity, while the second one seems to affect the substrate specificity of the first one. Upon T-cell activation, recruits and dephosphorylates SKAP1 and FYN. Dephosphorylates LYN, and thereby modulates LYN activity. Interacts with CLEC10A at antigen presenting cell-T cell contact; CLEC10A on immature dendritic cells recognizes Tn antigen-carrying PTPRC/CD45 receptor on effector T cells and modulates T cell activation threshold to limit autoreactivity. This chain is Receptor-type tyrosine-protein phosphatase C, found in Mus musculus (Mouse).